A 136-amino-acid chain; its full sequence is Ribosome-binding factor A (136 aa).

The protein belongs to the RbfA family. In terms of assembly, monomer. Binds 30S ribosomal subunits, but not 50S ribosomal subunits or 70S ribosomes.

Its subcellular location is the cytoplasm. In terms of biological role, one of several proteins that assist in the late maturation steps of the functional core of the 30S ribosomal subunit. Associates with free 30S ribosomal subunits (but not with 30S subunits that are part of 70S ribosomes or polysomes). Required for efficient processing of 16S rRNA. May interact with the 5'-terminal helix region of 16S rRNA. The polypeptide is Ribosome-binding factor A (Cellvibrio japonicus (strain Ueda107) (Pseudomonas fluorescens subsp. cellulosa)).